Consider the following 441-residue polypeptide: Serine/threonine-protein phosphatase 4 regulatory subunit 2 (441 aa).

Residues 201–213 (DEEEGFFDGDEDR) are compositionally biased toward acidic residues. Disordered stretches follow at residues 201-220 (DEEE…NKSK), 242-348 (INDD…LTTP), and 364-418 (SPSS…SQED). A compositionally biased stretch (polar residues) spans 249–261 (NKGQNCQSDVTKN). The span at 264–302 (DDEDDDDNDDDYREDGADEDDEDDDHMGSTDDDEDDDED) shows a compositional bias: acidic residues. At T347 the chain carries Phosphothreonine. Residues 388 to 398 (EDAHENHEGRS) are compositionally biased toward basic and acidic residues.

Belongs to the PPP4R2 family. Regulatory subunit (R2) of the histone H2A phosphatase complex (HTP-C) consisting of PPH3, PSY2 and PSY4. Interacts with SPT4 and SPT5.

The protein resides in the nucleus. Functionally, regulatory subunit of the histone H2A phosphatase complex, which dephosphorylates H2AS128ph (gamma-H2A) that has been displaced from sites of DNA lesions in the double-stranded DNA break repair process. Dephosphorylation is necessary for efficient recovery from the DNA damage checkpoint. This chain is Serine/threonine-protein phosphatase 4 regulatory subunit 2 (PSY4), found in Saccharomyces cerevisiae (strain ATCC 204508 / S288c) (Baker's yeast).